The sequence spans 311 residues: Small ribosomal subunit biogenesis GTPase RsgA (311 aa).

Residues 77–239 (LSKQSHIIAT…IIDTPGIKGF (163 aa)) form the CP-type G domain. Residues 126–129 (NKTD) and 180–188 (GHSGVGKST) each bind GTP. Zn(2+) is bound by residues Cys263, Cys268, His270, and Cys276.

It belongs to the TRAFAC class YlqF/YawG GTPase family. RsgA subfamily. In terms of assembly, monomer. Associates with 30S ribosomal subunit, binds 16S rRNA. Zn(2+) is required as a cofactor.

It is found in the cytoplasm. Functionally, one of several proteins that assist in the late maturation steps of the functional core of the 30S ribosomal subunit. Helps release RbfA from mature subunits. May play a role in the assembly of ribosomal proteins into the subunit. Circularly permuted GTPase that catalyzes slow GTP hydrolysis, GTPase activity is stimulated by the 30S ribosomal subunit. The sequence is that of Small ribosomal subunit biogenesis GTPase RsgA from Azobacteroides pseudotrichonymphae genomovar. CFP2.